The primary structure comprises 151 residues: Large ribosomal subunit protein uL22 (151 aa).

The disordered stretch occupies residues 1–25 (MARINYSVKEDPETTSKAMGSELHI).

This sequence belongs to the universal ribosomal protein uL22 family. In terms of assembly, part of the 50S ribosomal subunit.

Functionally, this protein binds specifically to 23S rRNA. It makes multiple contacts with different domains of the 23S rRNA in the assembled 50S subunit and ribosome. The globular domain of the protein is located near the polypeptide exit tunnel on the outside of the subunit, while an extended beta-hairpin is found that lines the wall of the exit tunnel in the center of the 70S ribosome. The polypeptide is Large ribosomal subunit protein uL22 (Methanosarcina barkeri (strain Fusaro / DSM 804)).